Here is a 296-residue protein sequence, read N- to C-terminus: MKIAVYGKGGIGKSTTSCNISIALARRGKKVLQIGCDPKHDSTFTLTGFLIPTIIDTLQSKDYHYEDVWPEDVIYKGYGGVDCVEAGGPPAGAGCGGYVVGETVKLLKELNAFYEYDVILFDVLGDVVCGGFAAPLNYADYCIIITDNGFDALFAANRIAASVREKARTHPLRLAGLVGNRTSKRDLIDKYVEACPMPVLEVLPLIEDIRVSRVKGKTLFEMVETEKSLNYVCEFYLNIADQLLARPEGVVPNEVPDRELFSLLSDFYLNPVNTSNESTNSSIEANQEVESSFLII.

Residues 10-15 (GIGKST) and Lys-39 each bind ATP. Ser-14 is a binding site for Mg(2+). [4Fe-4S] cluster-binding residues include Cys-95 and Cys-129. Position 180–181 (180–181 (NR)) interacts with ATP.

This sequence belongs to the NifH/BchL/ChlL family. In terms of assembly, homodimer. Protochlorophyllide reductase is composed of three subunits; ChlL, ChlN and ChlB. The cofactor is [4Fe-4S] cluster.

Its subcellular location is the plastid. The protein resides in the chloroplast. The enzyme catalyses chlorophyllide a + oxidized 2[4Fe-4S]-[ferredoxin] + 2 ADP + 2 phosphate = protochlorophyllide a + reduced 2[4Fe-4S]-[ferredoxin] + 2 ATP + 2 H2O. The protein operates within porphyrin-containing compound metabolism; chlorophyll biosynthesis (light-independent). Its function is as follows. Component of the dark-operative protochlorophyllide reductase (DPOR) that uses Mg-ATP and reduced ferredoxin to reduce ring D of protochlorophyllide (Pchlide) to form chlorophyllide a (Chlide). This reaction is light-independent. The L component serves as a unique electron donor to the NB-component of the complex, and binds Mg-ATP. The sequence is that of Light-independent protochlorophyllide reductase iron-sulfur ATP-binding protein from Mesostigma viride (Green alga).